The following is a 473-amino-acid chain: Ribulose bisphosphate carboxylase large chain (473 aa).

Substrate-binding residues include Asn-116 and Thr-166. The Proton acceptor role is filled by Lys-168. Lys-170 contributes to the substrate binding site. The Mg(2+) site is built by Lys-194, Asp-196, and Glu-197. Lys-194 is subject to N6-carboxylysine. The active-site Proton acceptor is the His-287. Arg-288, His-320, and Ser-372 together coordinate substrate.

Belongs to the RuBisCO large chain family. Type I subfamily. As to quaternary structure, heterohexadecamer of 8 large chains and 8 small chains. The cofactor is Mg(2+).

The enzyme catalyses 2 (2R)-3-phosphoglycerate + 2 H(+) = D-ribulose 1,5-bisphosphate + CO2 + H2O. It carries out the reaction D-ribulose 1,5-bisphosphate + O2 = 2-phosphoglycolate + (2R)-3-phosphoglycerate + 2 H(+). In terms of biological role, ruBisCO catalyzes two reactions: the carboxylation of D-ribulose 1,5-bisphosphate, the primary event in carbon dioxide fixation, as well as the oxidative fragmentation of the pentose substrate. Both reactions occur simultaneously and in competition at the same active site. The polypeptide is Ribulose bisphosphate carboxylase large chain (Rhodobacter capsulatus (strain ATCC BAA-309 / NBRC 16581 / SB1003)).